The chain runs to 529 residues: tRNA pseudouridine synthase Pus10 (529 aa).

Positions 21 and 24 each coordinate Zn(2+). The stretch at Lys42–Gly89 forms a coiled coil. Phosphoserine occurs at positions 79 and 84. The Zn(2+) site is built by Cys109 and Cys112. The RNA binding forefinger loop stretch occupies residues Thr304–Ser317. The Nucleophile role is filled by Asp344. An RNA binding thumb loop region spans residues Gln442–Arg457.

Belongs to the pseudouridine synthase Pus10 family. As to quaternary structure, interacts with components of the microprocessor complex DROSHA and DGCR8. Proteolytically cleaved during TRAIL-induced cell death. Cleaved, in vitro, either by caspase-3 (CASP3) or caspase-8 (CASP8).

It localises to the nucleus. The protein localises to the cytoplasm. Its subcellular location is the mitochondrion. It catalyses the reaction uridine(55) in tRNA = pseudouridine(55) in tRNA. The enzyme catalyses uridine(54) in tRNA = pseudouridine(54) in tRNA. Functionally, protein with different functions depending on its subcellular location: involved in miRNA processing in the nucleus and acts as a tRNA pseudouridylate synthase in the cytoplasm. In the cytoplasm, acts as a pseudouridylate synthase by catalyzing synthesis of pseudouridine(54) and pseudouridine(55) from uracil-54 and uracil-55, respectively, in the psi GC loop of a subset of tRNAs. tRNA pseudouridylate synthase activity is enhanced by the presence of 1-methyladenosine at position 53-61 of tRNAs. Does not show tRNA pseudouridylate synthase activity in the nucleus. In the nucleus, promotes primary microRNAs (pri-miRNAs) processing independently of its RNA pseudouridylate synthase activity. Binds pri-miRNAs. Modulator of TRAIL/TNFSF10-induced cell death via activation of procaspase-8 and BID cleavage. Required for the progression of the apoptotic signal through intrinsic mitochondrial cell death. This chain is tRNA pseudouridine synthase Pus10, found in Homo sapiens (Human).